A 241-amino-acid chain; its full sequence is Cobalt transport protein CbiM (241 aa).

The N-terminal stretch at 1 to 24 is a signal peptide; it reads MKKIKIISFSVAYLILLTPIYASA. 6 consecutive transmembrane segments (helical) span residues 30–50, 67–87, 99–119, 131–151, 160–180, and 202–222; these read GFLPPLWAAIWSVISLPFIVG, LLLGLVGAFVFVLSALKLPSV, LGTIIFGPLPMAVIGLIVLIF, TLGANVFSMAIVGPFAGYFIF, SLAVFLAAMLADLITYIVTSL, and GIFAITQIPLAIGEGILTLIV.

This sequence belongs to the CbiM family. As to quaternary structure, forms an energy-coupling factor (ECF) transporter complex composed of an ATP-binding protein (A component, CbiO), a transmembrane protein (T component, CbiQ) and 2 possible substrate-capture proteins (S components, CbiM and CbiN) of unknown stoichimetry.

The protein resides in the cell membrane. The protein operates within cofactor biosynthesis; adenosylcobalamin biosynthesis. Its function is as follows. Part of the energy-coupling factor (ECF) transporter complex CbiMNOQ involved in cobalt import. This chain is Cobalt transport protein CbiM, found in Acetoanaerobium sticklandii (strain ATCC 12662 / DSM 519 / JCM 1433 / CCUG 9281 / NCIMB 10654 / HF) (Clostridium sticklandii).